Here is a 190-residue protein sequence, read N- to C-terminus: uncharacterized protein (190 aa).

A Macro domain is found at 1–185 (MITMFKIVRG…LALETIGLGD (185 aa)).

This is an uncharacterized protein from Pyrococcus horikoshii (strain ATCC 700860 / DSM 12428 / JCM 9974 / NBRC 100139 / OT-3).